Consider the following 335-residue polypeptide: Nucleoid-associated protein YejK (335 aa).

Belongs to the YejK family.

It localises to the cytoplasm. The protein localises to the nucleoid. In Shigella flexneri, this protein is Nucleoid-associated protein YejK.